We begin with the raw amino-acid sequence, 366 residues long: Galactoside alpha-(1,2)-fucosyltransferase 1 (366 aa).

Residues 1–8 (MWPLSHRH) are Cytoplasmic-facing. Residues 9 to 25 (LCLAFLLVCVLSAISFF) form a helical; Signal-anchor for type II membrane protein membrane-spanning segment. Residues 26–366 (LHIHQDSFRH…LSPLWTLAEP (341 aa)) are Lumenal-facing. N-linked (GlcNAc...) asparagine glycans are attached at residues N66, N302, and N328.

Belongs to the glycosyltransferase 11 family.

The protein resides in the golgi apparatus. The protein localises to the golgi stack membrane. It catalyses the reaction a beta-D-galactosyl-(1-&gt;4)-N-acetyl-beta-D-glucosaminyl derivative + GDP-beta-L-fucose = an alpha-L-Fuc-(1-&gt;2)-beta-D-Gal-(1-&gt;4)-beta-D-GlcNAc derivative + GDP + H(+). The catalysed reaction is a ganglioside GA1 + GDP-beta-L-fucose = a ganglioside Fuc-GA1 + GDP + H(+). The enzyme catalyses a beta-D-Gal-(1-&gt;3)-beta-D-GlcNAc-(1-&gt;3)-beta-D-Gal-(1-&gt;4)-beta-D-Glc-(1&lt;-&gt;1')-Cer(d18:1(4E)) + GDP-beta-L-fucose = alpha-L-fucosyl-(1-&gt;2)- beta-D-galactosyl-(1-&gt;3)-N-acetyl-beta-D-glucosaminyl-(1-&gt;3)-beta-D-galactosyl-(1-&gt;4)-beta-D-glucosyl-(1&lt;-&gt;1')-N-acylsphing-4-enine + GDP + H(+). It carries out the reaction a neolactoside nLc4Cer(d18:1(4E)) + GDP-beta-L-fucose = a neolactoside IV(2)-alpha-Fuc-nLc4Cer(d18:1(4E)) + GDP + H(+). It catalyses the reaction a ganglioside GM1 + GDP-beta-L-fucose = a ganglioside Fuc-GM1 + GDP + H(+). The catalysed reaction is beta-D-galactosyl-(1-&gt;3)-N-acetyl-D-galactosamine + GDP-beta-L-fucose = alpha-L-fucosyl-(1-&gt;2)-beta-D-galactosyl-(1-&gt;3)-N-acetyl-D-galactosamine + GDP + H(+). It participates in protein modification; protein glycosylation. Its function is as follows. Catalyzes the transfer of L-fucose, from a guanosine diphosphate-beta-L-fucose, to the terminal galactose residue of glycoconjugates through an alpha(1,2) linkage leading to H antigen synthesis that is an intermediate substrate in the synthesis of ABO blood group antigens. H antigen is essential for maturation of the glomerular layer of the main olfactory bulb, in cell migration and early cell-cell contacts during tumor associated angiogenesis. Preferentially fucosylates soluble lactose and to a lesser extent fucosylates glycolipids gangliosides GA1 and GM1a. The chain is Galactoside alpha-(1,2)-fucosyltransferase 1 from Plecturocebus brunneus (Brown titi monkey).